We begin with the raw amino-acid sequence, 292 residues long: RNA-binding P34 protein (292 aa).

Residues 29-46 traverse the membrane as a helical segment; it reads CAIYTVACRILFLSVGFM. The tract at residues 219-292 is RNA-binding; that stretch reads EGFKSPQVEY…NFKAKNKNNE (74 aa).

It is found in the host endoplasmic reticulum membrane. Functionally, acts as a ssRNA-binding protein that may be involved in targeting RNA2 to replication sites or facilitating RNA2 replication. The protein is RNA-binding P34 protein of Lettuce infectious yellows virus (isolate United States/92) (LIYV).